A 254-amino-acid chain; its full sequence is Pyridoxine 5'-phosphate synthase (254 aa).

A 3-amino-2-oxopropyl phosphate-binding site is contributed by Asn12. 14 to 15 (DH) lines the 1-deoxy-D-xylulose 5-phosphate pocket. Residue Arg23 coordinates 3-amino-2-oxopropyl phosphate. Residue His48 is the Proton acceptor of the active site. Residues Arg50 and His55 each contribute to the 1-deoxy-D-xylulose 5-phosphate site. The Proton acceptor role is filled by Glu75. Position 105 (Thr105) interacts with 1-deoxy-D-xylulose 5-phosphate. His199 acts as the Proton donor in catalysis. 3-amino-2-oxopropyl phosphate is bound by residues Gly200 and 221 to 222 (GF).

This sequence belongs to the PNP synthase family. Homooctamer; tetramer of dimers.

It localises to the cytoplasm. It catalyses the reaction 3-amino-2-oxopropyl phosphate + 1-deoxy-D-xylulose 5-phosphate = pyridoxine 5'-phosphate + phosphate + 2 H2O + H(+). It functions in the pathway cofactor biosynthesis; pyridoxine 5'-phosphate biosynthesis; pyridoxine 5'-phosphate from D-erythrose 4-phosphate: step 5/5. Functionally, catalyzes the complicated ring closure reaction between the two acyclic compounds 1-deoxy-D-xylulose-5-phosphate (DXP) and 3-amino-2-oxopropyl phosphate (1-amino-acetone-3-phosphate or AAP) to form pyridoxine 5'-phosphate (PNP) and inorganic phosphate. This Rhodopseudomonas palustris (strain ATCC BAA-98 / CGA009) protein is Pyridoxine 5'-phosphate synthase.